The following is a 428-amino-acid chain: 26S proteasome regulatory subunit 7 (428 aa).

ATP is bound at residue Gly-211–Thr-218.

Belongs to the AAA ATPase family.

It is found in the cytoplasm. It localises to the nucleus. The 26S proteasome is involved in the ATP-dependent degradation of ubiquitinated proteins. The regulatory (or ATPase) complex confers ATP dependency and substrate specificity to the 26S complex. The sequence is that of 26S proteasome regulatory subunit 7 (psmC2) from Dictyostelium discoideum (Social amoeba).